A 1048-amino-acid chain; its full sequence is Probable histidine kinase 2 (1048 aa).

Over 1 to 16 (MREVEEVSKWRRRCCY) the chain is Cytoplasmic. A helical transmembrane segment spans residues 17 to 37 (FWILFPLAVIATCMTITVVTF). Over 38–336 (CSSTMYMTEV…AMVGVFRRGG (299 aa)) the chain is Extracellular. Residues 337–357 (VTMVAVACAAAAAATVACVLM) form a helical membrane-spanning segment. Residues 358–1048 (ARALRRAVAR…AVHGVCKGKN (691 aa)) lie on the Cytoplasmic side of the membrane. A Histidine kinase domain is found at 398–662 (SASHDIRSAL…CFGFNVLLKT (265 aa)). The residue at position 401 (histidine 401) is a Phosphohistidine; by autocatalysis. Positions 912–1044 (HVLLVEDTLV…RIVEAVHGVC (133 aa)) constitute a Response regulatory domain. A 4-aspartylphosphate modification is found at aspartate 975.

Post-translationally, activation probably requires a transfer of a phosphate group between a His in the transmitter domain and an Asp of the receiver domain.

It localises to the cell membrane. The enzyme catalyses ATP + protein L-histidine = ADP + protein N-phospho-L-histidine.. Its function is as follows. Cytokinin receptor related to bacterial two-component regulators. Functions as a histidine kinase and transmits the stress signal to a downstream MAPK cascade. In Oryza sativa subsp. indica (Rice), this protein is Probable histidine kinase 2.